A 1183-amino-acid chain; its full sequence is DNA-directed RNA polymerase subunit beta (1183 aa).

Acidic residues predominate over residues 1153 to 1162; it reads DMQDNEEEDV. The segment at 1153-1183 is disordered; it reads DMQDNEEEDVVERKVDLQQKDAPQSQKEVTD. Over residues 1173-1183 the composition is skewed to polar residues; the sequence is DAPQSQKEVTD.

It belongs to the RNA polymerase beta chain family. As to quaternary structure, the RNAP catalytic core consists of 2 alpha, 1 beta, 1 beta' and 1 omega subunit. When a sigma factor is associated with the core the holoenzyme is formed, which can initiate transcription.

The catalysed reaction is RNA(n) + a ribonucleoside 5'-triphosphate = RNA(n+1) + diphosphate. Functionally, DNA-dependent RNA polymerase catalyzes the transcription of DNA into RNA using the four ribonucleoside triphosphates as substrates. In Staphylococcus saprophyticus subsp. saprophyticus (strain ATCC 15305 / DSM 20229 / NCIMB 8711 / NCTC 7292 / S-41), this protein is DNA-directed RNA polymerase subunit beta.